Reading from the N-terminus, the 580-residue chain is PTS system fructose-specific EIIB'BC component (580 aa).

PTS EIIB type-2 domains lie at Met-1–Ala-99 and Ile-120–Ala-215. Cys-126 acts as the Phosphocysteine intermediate; for EIIB activity in catalysis. At Cys-126 the chain carries Phosphocysteine; by EIIA. A PTS EIIC type-2 domain is found at Ala-243–Ala-580. A run of 9 helical transmembrane segments spans residues Met-254–Ile-274, Leu-289–Ile-309, Leu-332–Ala-352, Val-369–Gly-389, Ser-410–Val-430, Ala-451–Phe-471, Ala-483–Ala-503, Thr-509–Ala-529, and His-549–Leu-571.

It is found in the cell inner membrane. The enzyme catalyses D-fructose(out) + N(pros)-phospho-L-histidyl-[protein] = D-fructose 1-phosphate(in) + L-histidyl-[protein]. Its function is as follows. The phosphoenolpyruvate-dependent sugar phosphotransferase system (sugar PTS), a major carbohydrate active transport system, catalyzes the phosphorylation of incoming sugar substrates concomitantly with their translocation across the cell membrane. The enzyme II FruAB PTS system is involved in fructose transport. This is PTS system fructose-specific EIIB'BC component from Xanthomonas campestris pv. campestris (strain ATCC 33913 / DSM 3586 / NCPPB 528 / LMG 568 / P 25).